The following is a 316-amino-acid chain: Cilia-and flagella-associated protein 96 (316 aa).

The disordered stretch occupies residues 220–242 (EEKKEVSFKPFKPSSPGKKAGGM). Over residues 227–237 (FKPFKPSSPGK) the composition is skewed to low complexity.

The protein belongs to the CFAP96 family.

The protein resides in the cytoplasm. The protein localises to the cytoskeleton. It is found in the microtubule organizing center. It localises to the centrosome. This chain is Cilia-and flagella-associated protein 96 (Cfap96), found in Mus musculus (Mouse).